We begin with the raw amino-acid sequence, 420 residues long: Adenylosuccinate synthetase (420 aa).

GTP contacts are provided by residues 12-18 and 40-42; these read GDEGKGK and GHT. D13 (proton acceptor) is an active-site residue. 2 residues coordinate Mg(2+): D13 and G40. Residues 13 to 16, 38 to 41, T128, R142, Q221, T236, and R299 contribute to the IMP site; these read DEGK and NAGH. H41 functions as the Proton donor in the catalytic mechanism. 295–301 serves as a coordination point for substrate; it reads ATTGRPR. Residues R301, 327–329, and 399–401 each bind GTP; these read KAD and SYG.

The protein belongs to the adenylosuccinate synthetase family. Homodimer. Mg(2+) is required as a cofactor.

The protein localises to the cytoplasm. The enzyme catalyses IMP + L-aspartate + GTP = N(6)-(1,2-dicarboxyethyl)-AMP + GDP + phosphate + 2 H(+). It participates in purine metabolism; AMP biosynthesis via de novo pathway; AMP from IMP: step 1/2. Functionally, plays an important role in the de novo pathway of purine nucleotide biosynthesis. Catalyzes the first committed step in the biosynthesis of AMP from IMP. This chain is Adenylosuccinate synthetase, found in Petrotoga mobilis (strain DSM 10674 / SJ95).